A 413-amino-acid polypeptide reads, in one-letter code: Arginine biosynthesis bifunctional protein ArgJ (413 aa).

Substrate is bound by residues Thr158, Lys184, Thr195, Glu285, Asn408, and Ser413. Thr195 acts as the Nucleophile in catalysis.

Belongs to the ArgJ family. As to quaternary structure, heterotetramer of two alpha and two beta chains.

The protein resides in the cytoplasm. It carries out the reaction N(2)-acetyl-L-ornithine + L-glutamate = N-acetyl-L-glutamate + L-ornithine. It catalyses the reaction L-glutamate + acetyl-CoA = N-acetyl-L-glutamate + CoA + H(+). It participates in amino-acid biosynthesis; L-arginine biosynthesis; L-ornithine and N-acetyl-L-glutamate from L-glutamate and N(2)-acetyl-L-ornithine (cyclic): step 1/1. Its pathway is amino-acid biosynthesis; L-arginine biosynthesis; N(2)-acetyl-L-ornithine from L-glutamate: step 1/4. Functionally, catalyzes two activities which are involved in the cyclic version of arginine biosynthesis: the synthesis of N-acetylglutamate from glutamate and acetyl-CoA as the acetyl donor, and of ornithine by transacetylation between N(2)-acetylornithine and glutamate. The protein is Arginine biosynthesis bifunctional protein ArgJ of Mesorhizobium japonicum (strain LMG 29417 / CECT 9101 / MAFF 303099) (Mesorhizobium loti (strain MAFF 303099)).